A 597-amino-acid polypeptide reads, in one-letter code: Sulfite reductase [NADPH] flavoprotein alpha-component (597 aa).

Residues 62–200 form the Flavodoxin-like domain; the sequence is VTVLSASQTG…TADKWIQDVV (139 aa). FMN-binding positions include 68-73, 115-118, and 151-160; these read SQTGNA, STQG, and LGDTSYPNFC. The region spanning 232–446 is the FAD-binding FR-type domain; sequence ENPYTAKLIT…VEPNDNFRLP (215 aa). FAD-binding positions include threonine 320, asparagine 354, 384–387, 402–404, and 417–420; these read RLYS, SVG, and GVAS. NADP(+) contacts are provided by residues 517 to 518, 523 to 527, and aspartate 559; these read SR and KIYVQ. Tyrosine 597 contributes to the FAD binding site.

The protein belongs to the NADPH-dependent sulphite reductase flavoprotein subunit CysJ family. In the N-terminal section; belongs to the flavodoxin family. This sequence in the C-terminal section; belongs to the flavoprotein pyridine nucleotide cytochrome reductase family. In terms of assembly, alpha(8)-beta(8). The alpha component is a flavoprotein, the beta component is a hemoprotein. FAD serves as cofactor. The cofactor is FMN.

It catalyses the reaction hydrogen sulfide + 3 NADP(+) + 3 H2O = sulfite + 3 NADPH + 4 H(+). It participates in sulfur metabolism; hydrogen sulfide biosynthesis; hydrogen sulfide from sulfite (NADPH route): step 1/1. Its function is as follows. Component of the sulfite reductase complex that catalyzes the 6-electron reduction of sulfite to sulfide. This is one of several activities required for the biosynthesis of L-cysteine from sulfate. The flavoprotein component catalyzes the electron flow from NADPH -&gt; FAD -&gt; FMN to the hemoprotein component. The polypeptide is Sulfite reductase [NADPH] flavoprotein alpha-component (Mannheimia succiniciproducens (strain KCTC 0769BP / MBEL55E)).